The chain runs to 947 residues: Bifunctional glutamine synthetase adenylyltransferase/adenylyl-removing enzyme (947 aa).

Residues 1 to 440 (MTPLSSPLSQ…VFNELIGDDE (440 aa)) form an adenylyl removase region. The interval 450–947 (SEPWREVWQD…ASWRKWLVAV (498 aa)) is adenylyl transferase.

This sequence belongs to the GlnE family. Mg(2+) is required as a cofactor.

It catalyses the reaction [glutamine synthetase]-O(4)-(5'-adenylyl)-L-tyrosine + phosphate = [glutamine synthetase]-L-tyrosine + ADP. The enzyme catalyses [glutamine synthetase]-L-tyrosine + ATP = [glutamine synthetase]-O(4)-(5'-adenylyl)-L-tyrosine + diphosphate. In terms of biological role, involved in the regulation of glutamine synthetase GlnA, a key enzyme in the process to assimilate ammonia. When cellular nitrogen levels are high, the C-terminal adenylyl transferase (AT) inactivates GlnA by covalent transfer of an adenylyl group from ATP to specific tyrosine residue of GlnA, thus reducing its activity. Conversely, when nitrogen levels are low, the N-terminal adenylyl removase (AR) activates GlnA by removing the adenylyl group by phosphorolysis, increasing its activity. The regulatory region of GlnE binds the signal transduction protein PII (GlnB) which indicates the nitrogen status of the cell. This is Bifunctional glutamine synthetase adenylyltransferase/adenylyl-removing enzyme from Salmonella heidelberg (strain SL476).